The primary structure comprises 566 residues: Transcription factor atf1 (566 aa).

The segment covering 1–42 (MSPSPVNTSTEPASVAAVSNGNATASSTQVPENNQSDSFAPP) has biased composition (polar residues). 4 disordered regions span residues 1 to 83 (MSPS…FVGS), 96 to 117 (SFGSTASVGQGNPSLNRNPSLS), 315 to 345 (QQQTFPDSIRPSFTQNTNPQAVTGTMNPQAS), and 357 to 479 (SQQF…KSFL). Residues 43–53 (SNNSQQNQQSS) show a composition bias toward low complexity. 2 stretches are compositionally biased toward polar residues: residues 65–76 (ANANPADQSDGV) and 97–106 (FGSTASVGQG). Low complexity predominate over residues 107–117 (NPSLNRNPSLS). Composition is skewed to polar residues over residues 379-412 (TLRQTTDFSGQNAENGSTNLPQKTSNSDMPTANS) and 421-460 (TDYSTSQEPSSNANNQSSPTSSINGKASSESANGTSYSKG). The segment covering 466–479 (SKNETDEEKRKSFL) has biased composition (basic and acidic residues). Residues 472 to 535 (EEKRKSFLER…VSLKTLLIAH (64 aa)) form the bZIP domain. The interval 474-503 (KRKSFLERNRQAALKCRQRKKQWLSNLQAK) is basic motif. The leucine-zipper stretch occupies residues 514-528 (LSAQVSALREEIVSL).

The protein belongs to the bZIP family. In terms of assembly, heterodimer of pcr1/mts2 and atf1/mts1. Post-translationally, phosphorylated by sty1/spc1.

It localises to the nucleus. Its function is as follows. Transcription factor required for sexual development and entry into stationary phase. Binds and activates CRE sites (cAMP-response elements, also known as M26 meiotic recombination hotspots). The sequence is that of Transcription factor atf1 (atf1) from Schizosaccharomyces pombe (strain 972 / ATCC 24843) (Fission yeast).